The following is a 373-amino-acid chain: Trifolitoxin-processing protein TfxB (373 aa).

To E.coli McbC which is involved in the processing of microcin B17 (MCCB17).

It localises to the cytoplasm. In terms of biological role, the actions of the proteins TfxB, TfxD and TfxF are implicated in the processing of the inactive trifolitoxin (TfxA) precursor into the active peptide. This chain is Trifolitoxin-processing protein TfxB (tfxB), found in Rhizobium leguminosarum bv. trifolii.